Here is a 368-residue protein sequence, read N- to C-terminus: Peptide chain release factor 2 (368 aa).

N5-methylglutamine is present on Q250.

It belongs to the prokaryotic/mitochondrial release factor family. Post-translationally, methylated by PrmC. Methylation increases the termination efficiency of RF2.

Its subcellular location is the cytoplasm. Peptide chain release factor 2 directs the termination of translation in response to the peptide chain termination codons UGA and UAA. In Rickettsia felis (strain ATCC VR-1525 / URRWXCal2) (Rickettsia azadi), this protein is Peptide chain release factor 2.